The chain runs to 318 residues: ADP-ribosyl cyclase/cyclic ADP-ribose hydrolase 2 (318 aa).

The N-terminal stretch at methionine 1–alanine 32 is a signal peptide. Intrachain disulfides connect cysteine 51-cysteine 67, cysteine 83-cysteine 163, and cysteine 144-cysteine 157. Asparagine 66 and asparagine 95 each carry an N-linked (GlcNAc...) asparagine glycan. Tryptophan 109 is a binding site for NAD(+). A nicotinamide-binding site is contributed by tryptophan 109. Asparagine 148 is a glycosylation site (N-linked (GlcNAc...) asparagine). Tryptophan 172 contributes to the NAD(+) binding site. Residue asparagine 192 is glycosylated (N-linked (GlcNAc...) asparagine). Residue glutamate 210 coordinates NAD(+). Intrachain disulfides connect cysteine 238-cysteine 259 and cysteine 271-cysteine 280. Alanine 293 carries the GPI-anchor amidated alanine lipid modification. A propeptide spans proline 294–leucine 318 (removed in mature form).

Belongs to the ADP-ribosyl cyclase family. In terms of assembly, homodimer. As to expression, expressed in various tissues including placenta, lung, liver and kidney.

It localises to the cell membrane. The enzyme catalyses NAD(+) + H2O = ADP-D-ribose + nicotinamide + H(+). It carries out the reaction NAD(+) = cyclic ADP-beta-D-ribose + nicotinamide + H(+). The catalysed reaction is cyclic ADP-beta-D-ribose + H2O = ADP-D-ribose. With respect to regulation, ADP-ribosyl cyclase and cADPR hydrolase activities are both activated by Zn(2+) or Mn(2+), and inhibited by Cu(2+), while Mg(2+) and Ca(2+) do not have any significant influence. Catalyzes both the synthesis of cyclic ADP-beta-D-ribose (cADPR) from NAD(+), and its hydrolysis to ADP-D-ribose (ADPR). Cyclic ADPR is known to serve as an endogenous second messenger that elicits calcium release from intracellular stores, and thus regulates the mobilization of intracellular calcium. May be involved in pre-B-cell growth. This Homo sapiens (Human) protein is ADP-ribosyl cyclase/cyclic ADP-ribose hydrolase 2 (BST1).